The chain runs to 422 residues: GTPase Obg (422 aa).

The 158-residue stretch at 1-158 folds into the Obg domain; it reads MFYDRAKIYV…LWLELELKVI (158 aa). Positions 159–330 constitute an OBG-type G domain; that stretch reads ADVGLIGFPN…VIHRVAELLA (172 aa). GTP is bound by residues 165–172, 190–194, 212–215, 282–285, and 311–313; these read GFPNAGKS, FTTLV, DIPG, NKMD, and SAA. Positions 172 and 192 each coordinate Mg(2+). The 79-residue stretch at 344–422 folds into the OCT domain; that stretch reads VMFEPEERFN…IGDWEFEWSE (79 aa).

The protein belongs to the TRAFAC class OBG-HflX-like GTPase superfamily. OBG GTPase family. As to quaternary structure, monomer. Mg(2+) is required as a cofactor.

Its subcellular location is the cytoplasm. Functionally, an essential GTPase which binds GTP, GDP and possibly (p)ppGpp with moderate affinity, with high nucleotide exchange rates and a fairly low GTP hydrolysis rate. Plays a role in control of the cell cycle, stress response, ribosome biogenesis and in those bacteria that undergo differentiation, in morphogenesis control. In Desulforamulus reducens (strain ATCC BAA-1160 / DSM 100696 / MI-1) (Desulfotomaculum reducens), this protein is GTPase Obg.